A 161-amino-acid polypeptide reads, in one-letter code: Transcription elongation factor GreA (161 aa).

A coiled-coil region spans residues Leu-8 to Arg-28.

This sequence belongs to the GreA/GreB family.

Necessary for efficient RNA polymerase transcription elongation past template-encoded arresting sites. The arresting sites in DNA have the property of trapping a certain fraction of elongating RNA polymerases that pass through, resulting in locked ternary complexes. Cleavage of the nascent transcript by cleavage factors such as GreA or GreB allows the resumption of elongation from the new 3'terminus. GreA releases sequences of 2 to 3 nucleotides. This is Transcription elongation factor GreA from Mycoplasma genitalium (strain ATCC 33530 / DSM 19775 / NCTC 10195 / G37) (Mycoplasmoides genitalium).